The sequence spans 387 residues: S-adenosylmethionine synthase (387 aa).

Histidine 17 is an ATP binding site. Aspartate 19 contacts Mg(2+). K(+) is bound at residue glutamate 45. L-methionine contacts are provided by glutamate 58 and glutamine 101. The tract at residues 101–111 is flexible loop; that stretch reads QSADIAMGVDA. ATP is bound by residues 166–168, 231–232, aspartate 240, 246–247, alanine 263, and lysine 267; these read DAK, RF, and RK. Aspartate 240 contributes to the L-methionine binding site. An L-methionine-binding site is contributed by lysine 271.

Belongs to the AdoMet synthase family. As to quaternary structure, homotetramer; dimer of dimers. Requires Mg(2+) as cofactor. K(+) serves as cofactor.

Its subcellular location is the cytoplasm. It carries out the reaction L-methionine + ATP + H2O = S-adenosyl-L-methionine + phosphate + diphosphate. The protein operates within amino-acid biosynthesis; S-adenosyl-L-methionine biosynthesis; S-adenosyl-L-methionine from L-methionine: step 1/1. Functionally, catalyzes the formation of S-adenosylmethionine (AdoMet) from methionine and ATP. The overall synthetic reaction is composed of two sequential steps, AdoMet formation and the subsequent tripolyphosphate hydrolysis which occurs prior to release of AdoMet from the enzyme. This chain is S-adenosylmethionine synthase, found in Rhodospirillum centenum (strain ATCC 51521 / SW).